The primary structure comprises 902 residues: Protein translocase subunit SecA (902 aa).

Residues Gln-89, 107–111 (GEGKT), and Asp-502 contribute to the ATP site. Residues Cys-884, Cys-886, Cys-895, and His-896 each contribute to the Zn(2+) site.

Belongs to the SecA family. In terms of assembly, monomer and homodimer. Part of the essential Sec protein translocation apparatus which comprises SecA, SecYEG and auxiliary proteins SecDF-YajC and YidC. The cofactor is Zn(2+).

The protein localises to the cell inner membrane. It localises to the cytoplasm. It carries out the reaction ATP + H2O + cellular proteinSide 1 = ADP + phosphate + cellular proteinSide 2.. Part of the Sec protein translocase complex. Interacts with the SecYEG preprotein conducting channel. Has a central role in coupling the hydrolysis of ATP to the transfer of proteins into and across the cell membrane, serving both as a receptor for the preprotein-SecB complex and as an ATP-driven molecular motor driving the stepwise translocation of polypeptide chains across the membrane. The protein is Protein translocase subunit SecA of Agrobacterium fabrum (strain C58 / ATCC 33970) (Agrobacterium tumefaciens (strain C58)).